Here is a 226-residue protein sequence, read N- to C-terminus: Cytidylate kinase (226 aa).

Position 10 to 18 (10 to 18 (GFSSTGKST)) interacts with ATP.

Belongs to the cytidylate kinase family. Type 1 subfamily.

Its subcellular location is the cytoplasm. The enzyme catalyses CMP + ATP = CDP + ADP. The catalysed reaction is dCMP + ATP = dCDP + ADP. This chain is Cytidylate kinase, found in Flavobacterium psychrophilum (strain ATCC 49511 / DSM 21280 / CIP 103535 / JIP02/86).